Reading from the N-terminus, the 356-residue chain is Carminomycin 4-O-methyltransferase DnrK (356 aa).

Arg-153 contacts S-adenosyl-L-methionine. Asp-163 provides a ligand contact to substrate. S-adenosyl-L-methionine contacts are provided by residues Gly-187, Glu-210, 237–238 (DF), and Ser-252. Asn-257 and Arg-303 together coordinate substrate.

Belongs to the class I-like SAM-binding methyltransferase superfamily. Cation-independent O-methyltransferase family. As to quaternary structure, homodimer and homotetramer in equilibrium.

The enzyme catalyses carminomycin + S-adenosyl-L-methionine = daunorubicin + S-adenosyl-L-homocysteine + H(+). The protein operates within antibiotic biosynthesis; daunorubicin biosynthesis. It participates in antibiotic biosynthesis; carminomycin biosynthesis. Involved in the biosynthesis of the anthracyclines carminomycin and daunorubicin (daunomycin) which are aromatic polyketide antibiotics that exhibit high cytotoxicity and are widely applied in the chemotherapy of a variety of cancers. In vivo, catalyzes the transfer of a methyl group from S-adenosyl-L-methionine to the 4-O-position of carminomycin to form daunorubicin. In vitro, it also methylates the anthracyclines rhodomycin D (10-carbomethoxy-13-deoxycarminomycin) and 13-deoxy-carminomycin at the 4-hydroxyl position. It is quite specific with respect to the length of the carbohydrate chain at the C7 position, but it can accept substrates with bulky substituent at C10 position. This Streptomyces peucetius protein is Carminomycin 4-O-methyltransferase DnrK (dnrK).